We begin with the raw amino-acid sequence, 111 residues long: UPF0122 protein CKR_1296 (111 aa).

It belongs to the UPF0122 family.

Its function is as follows. Might take part in the signal recognition particle (SRP) pathway. This is inferred from the conservation of its genetic proximity to ftsY/ffh. May be a regulatory protein. The protein is UPF0122 protein CKR_1296 of Clostridium kluyveri (strain NBRC 12016).